We begin with the raw amino-acid sequence, 307 residues long: Metapyrocatechase (307 aa).

VOC domains are found at residues 7 to 122 (RPGH…LYAD) and 150 to 269 (RFDH…VFCG). Positions 153, 214, and 265 each coordinate Fe cation.

Belongs to the extradiol ring-cleavage dioxygenase family. In terms of assembly, homotetramer. Fe(2+) is required as a cofactor.

It catalyses the reaction catechol + O2 = (2Z,4E)-2-hydroxy-6-oxohexa-2,4-dienoate + H(+). The protein operates within xenobiotic degradation; toluene degradation. This chain is Metapyrocatechase (xylE), found in Pseudomonas putida (Arthrobacter siderocapsulatus).